A 293-amino-acid polypeptide reads, in one-letter code: Probable metal transport system membrane protein CT_417 (293 aa).

The next 7 helical transmembrane spans lie at 18 to 38 (SLLA…YIVV), 41 to 61 (IVSI…IALW), 68 to 88 (LPIS…ICIG), 101 to 121 (IISM…SKLP), 135 to 155 (ILWV…FIVA), 187 to 207 (LLLI…GVIL), and 242 to 262 (FLGI…IAIL).

The protein belongs to the ABC-3 integral membrane protein family.

Its subcellular location is the cell inner membrane. In terms of biological role, part of an ATP-driven transport system CT_415/CT_416/CT_417 for a metal. The chain is Probable metal transport system membrane protein CT_417 from Chlamydia trachomatis serovar D (strain ATCC VR-885 / DSM 19411 / UW-3/Cx).